The following is a 1405-amino-acid chain: DNA-directed RNA polymerase subunit beta' (1405 aa).

Zn(2+)-binding residues include Cys71, Cys73, Cys86, and Cys89. Mg(2+)-binding residues include Asp462, Asp464, and Asp466. Residues Cys820, Cys893, Cys900, and Cys903 each coordinate Zn(2+).

Belongs to the RNA polymerase beta' chain family. In terms of assembly, the RNAP catalytic core consists of 2 alpha, 1 beta, 1 beta' and 1 omega subunit. When a sigma factor is associated with the core the holoenzyme is formed, which can initiate transcription. Mg(2+) serves as cofactor. Zn(2+) is required as a cofactor.

The catalysed reaction is RNA(n) + a ribonucleoside 5'-triphosphate = RNA(n+1) + diphosphate. DNA-dependent RNA polymerase catalyzes the transcription of DNA into RNA using the four ribonucleoside triphosphates as substrates. This Methylorubrum populi (strain ATCC BAA-705 / NCIMB 13946 / BJ001) (Methylobacterium populi) protein is DNA-directed RNA polymerase subunit beta'.